Here is a 283-residue protein sequence, read N- to C-terminus: MSKFLSQAAINTLRNTRLGSRQLVRSFAGISNTRNHREAGHQEWGCGQSAGRGLLELRMPVACRRSMFIQTQDTPNPESLKFLPGVDVLGKGNTYDFPNGTTAHSSPLAKLLFRVEGVKGVFFGADFITISKQEGAEWSLIKPEVFAVIMDFFASGLPVLNDAQPNADTEILEDDDETVMMIKELLDTRIRPTVQEDGGDIVFMGYEAGVVKLKMQGSCSSCPSSIVTLKNGVQNMLQFYIPEVESVEQVFDEADRMIDSEFERFEKNLKTLKQQEPSGGGPH.

The N-terminal 65 residues, 1–65 (MSKFLSQAAI…ELRMPVACRR (65 aa)), are a transit peptide targeting the mitochondrion. Residues 182–250 (IKELLDTRIR…IPEVESVEQV (69 aa)) form a nifU region. The [4Fe-4S] cluster site is built by C219 and C222.

Belongs to the NifU family.

It localises to the mitochondrion. In terms of biological role, molecular scaffold for [Fe-S] cluster assembly of mitochondrial iron-sulfur proteins. This Drosophila sechellia (Fruit fly) protein is NFU1 iron-sulfur cluster scaffold homolog, mitochondrial.